The sequence spans 232 residues: 6-phosphogluconolactonase (232 aa).

Belongs to the glucosamine/galactosamine-6-phosphate isomerase family. 6-phosphogluconolactonase subfamily.

It catalyses the reaction 6-phospho-D-glucono-1,5-lactone + H2O = 6-phospho-D-gluconate + H(+). The protein operates within carbohydrate degradation; pentose phosphate pathway; D-ribulose 5-phosphate from D-glucose 6-phosphate (oxidative stage): step 2/3. Functionally, hydrolysis of 6-phosphogluconolactone to 6-phosphogluconate. This Haemophilus influenzae (strain ATCC 51907 / DSM 11121 / KW20 / Rd) protein is 6-phosphogluconolactonase (pgl).